Reading from the N-terminus, the 282-residue chain is Elongation factor Ts (282 aa).

An involved in Mg(2+) ion dislocation from EF-Tu region spans residues 80–83; sequence TDFV.

The protein belongs to the EF-Ts family.

Its subcellular location is the cytoplasm. In terms of biological role, associates with the EF-Tu.GDP complex and induces the exchange of GDP to GTP. It remains bound to the aminoacyl-tRNA.EF-Tu.GTP complex up to the GTP hydrolysis stage on the ribosome. This chain is Elongation factor Ts, found in Chlamydia trachomatis serovar L2 (strain ATCC VR-902B / DSM 19102 / 434/Bu).